A 331-amino-acid chain; its full sequence is MKVAENQKVYDITIIGGGPTGLFTAFYGGMRQASVKIIESLPQLGGQLSALYPEKYIYDVAGFPKVRAQELVDNLKEQMKKFDPTVCLEEAVDTLEKQADGIFKLVTNKQTHYSKSVIITAGNGAFQPRRLELEGTAKYEKKNLHYFVDDMNKFAGKRVVVFGGGDSAVDWTMMLEPIADKVTIVHRRDKFRAHEHSVESLMNSRAEVSTPYVPVELIGDDKIEQVVLQHVKTEEKIIIDVDDVIVNYGFVSSLGPIKNWGLDIQKNSILVNSKMETNIPGIYAAGDICTYEGKVKLIACGFGEAPTAVNNAKAYFDPNAKLQPMHSSSMF.

FAD contacts are provided by Thr20, Glu39, Gln47, Tyr52, Val92, Phe126, Asp287, and Ser328.

It belongs to the ferredoxin--NADP reductase type 2 family. As to quaternary structure, homodimer. It depends on FAD as a cofactor.

It carries out the reaction 2 reduced [2Fe-2S]-[ferredoxin] + NADP(+) + H(+) = 2 oxidized [2Fe-2S]-[ferredoxin] + NADPH. This is Ferredoxin--NADP reductase from Bacillus cereus (strain ZK / E33L).